The primary structure comprises 1300 residues: Serine protease EspP (1300 aa).

Positions 1–55 are cleaved as a signal peptide; the sequence is MNKIYSLKYSHITGGLIAVSELSGRVSSRATGKKKHKRILALCFLGLLQSSYSFA. In terms of domain architecture, Peptidase S6 spans 57–311; sequence QMDISNFYIR…NQTTIDNLKN (255 aa). Catalysis depends on charge relay system residues histidine 127, aspartate 156, and serine 263. The Autotransporter domain occupies 1034–1300; that stretch reads DINGEAGAWA…AVNANFRYSF (267 aa).

Post-translationally, cleaved to release the mature protein from the outer membrane.

The protein resides in the periplasm. The protein localises to the secreted. It localises to the cell surface. It is found in the cell outer membrane. Its activity is regulated as follows. Inhibition of cytotoxic activity by phenylmethylsulfonyl fluoride. Functionally, serine protease capable of cleaving pepsin A and human coagulation factor V, which may contribute to the mucosal hemorrhage observed in hemorrhagic colitis. This Escherichia coli O157:H7 protein is Serine protease EspP (espP).